Reading from the N-terminus, the 367-residue chain is tRNA/tmRNA (uracil-C(5))-methyltransferase (367 aa).

Positions 182, 210, 215, 231, and 293 each coordinate S-adenosyl-L-methionine. Cysteine 318 functions as the Nucleophile in the catalytic mechanism. The active-site Proton acceptor is the glutamate 352.

This sequence belongs to the class I-like SAM-binding methyltransferase superfamily. RNA M5U methyltransferase family. TrmA subfamily.

The enzyme catalyses uridine(54) in tRNA + S-adenosyl-L-methionine = 5-methyluridine(54) in tRNA + S-adenosyl-L-homocysteine + H(+). It catalyses the reaction uridine(341) in tmRNA + S-adenosyl-L-methionine = 5-methyluridine(341) in tmRNA + S-adenosyl-L-homocysteine + H(+). Functionally, dual-specificity methyltransferase that catalyzes the formation of 5-methyluridine at position 54 (m5U54) in all tRNAs, and that of position 341 (m5U341) in tmRNA (transfer-mRNA). This Neisseria meningitidis serogroup C (strain 053442) protein is tRNA/tmRNA (uracil-C(5))-methyltransferase.